Consider the following 857-residue polypeptide: Mitogen-activated protein kinase kinase kinase dlk-1 (857 aa).

The region spanning 62–304 (ISNLEWLGSG…FSHIRQHWEI (243 aa)) is the Protein kinase domain. Residues 68–76 (LGSGSQGAV) and Lys-89 each bind ATP. Asp-173 functions as the Proton acceptor in the catalytic mechanism. Disordered regions lie at residues 441–503 (EEMS…ISRN), 572–625 (RIAS…PSRN), 733–775 (NAND…MESE), and 818–857 (HSIK…AVRI). Residues 467–488 (SSGAQSSPFSRQSSCRSSAGQQ) show a composition bias toward low complexity. The span at 609-623 (APRSSSKLNRSSYPS) shows a compositional bias: polar residues. The segment covering 753-762 (ADVESSEDEG) has biased composition (acidic residues). Residues 763–772 (NGNNILNTSM) are compositionally biased toward polar residues.

This sequence belongs to the protein kinase superfamily. STE Ser/Thr protein kinase family. MAP kinase kinase kinase subfamily. The cofactor is Mg(2+). Ubiquitinated by rpm-1. Negatively regulated by ubiquitination by fsn-1 bound rpm-1, followed by degradation.

The protein resides in the synapse. It carries out the reaction L-seryl-[protein] + ATP = O-phospho-L-seryl-[protein] + ADP + H(+). The catalysed reaction is L-threonyl-[protein] + ATP = O-phospho-L-threonyl-[protein] + ADP + H(+). Functionally, component of a MAP kinase pathway that functions presynaptically to regulate synaptic architecture and presynaptic differentiation. Phosphorylates and activates mkk-4. In Caenorhabditis briggsae, this protein is Mitogen-activated protein kinase kinase kinase dlk-1.